A 54-amino-acid chain; its full sequence is MAKWVCKICGYIYDEDAGDPDNGISPGTKFEELPDDWVCPICGAPKSEFEKLED.

Residues 2–52 (AKWVCKICGYIYDEDAGDPDNGISPGTKFEELPDDWVCPICGAPKSEFEKL) form the Rubredoxin-like domain. Residues Cys6, Cys9, Cys39, and Cys42 each contribute to the Fe cation site.

Belongs to the rubredoxin family. It depends on Fe(3+) as a cofactor.

Its function is as follows. Rubredoxin is a small nonheme, iron protein lacking acid-labile sulfide. Its single Fe, chelated to 4 Cys, functions as an electron acceptor and may also stabilize the conformation of the molecule. This is Rubredoxin (rub) from Pyrococcus furiosus (strain ATCC 43587 / DSM 3638 / JCM 8422 / Vc1).